The sequence spans 280 residues: Nitrogenase iron protein (280 aa).

ATP is bound at residue 9-16 (GKGGIGKS). A [4Fe-4S] cluster-binding site is contributed by Cys97. Arg100 is subject to ADP-ribosylarginine; by dinitrogenase reductase ADP-ribosyltransferase. Residue Cys132 coordinates [4Fe-4S] cluster.

The protein belongs to the NifH/BchL/ChlL family. As to quaternary structure, homodimer. [4Fe-4S] cluster is required as a cofactor. The reversible ADP-ribosylation of Arg-100 inactivates the nitrogenase reductase and regulates nitrogenase activity.

The enzyme catalyses N2 + 8 reduced [2Fe-2S]-[ferredoxin] + 16 ATP + 16 H2O = H2 + 8 oxidized [2Fe-2S]-[ferredoxin] + 2 NH4(+) + 16 ADP + 16 phosphate + 6 H(+). In terms of biological role, the key enzymatic reactions in nitrogen fixation are catalyzed by the nitrogenase complex, which has 2 components: the iron protein and the molybdenum-iron protein. This is Nitrogenase iron protein from Desulforudis audaxviator (strain MP104C).